The sequence spans 330 residues: Diacylglycerol kinase (330 aa).

The DAGKc domain occupies 1-132 (MRKCARIIYN…VDIGKMNNRY (132 aa)). ATP-binding positions include 10–14 (NPTSG), Thr41, 67–73 (GDGTLNE), and Thr94. Residues Lys213, Asp216, and His218 each contribute to the Mg(2+) site. Catalysis depends on Glu273, which acts as the Proton acceptor.

It belongs to the diacylglycerol/lipid kinase family. As to quaternary structure, homodimer. Mg(2+) serves as cofactor.

The catalysed reaction is a 1,2-diacyl-sn-glycerol + ATP = a 1,2-diacyl-sn-glycero-3-phosphate + ADP + H(+). Its function is as follows. Catalyzes the phosphorylation of diacylglycerol (DAG) into phosphatidic acid. Is a key enzyme involved in the production of lipoteichoic acid by reintroducing DAG formed from the breakdown of membrane phospholipids into the phosphatidylglycerol biosynthetic pathway. This Staphylococcus haemolyticus (strain JCSC1435) protein is Diacylglycerol kinase (dagK).